The primary structure comprises 262 residues: tRNA pseudouridine synthase A (262 aa).

The active-site Nucleophile is D51. Y109 contributes to the substrate binding site.

Belongs to the tRNA pseudouridine synthase TruA family. Homodimer.

It catalyses the reaction uridine(38/39/40) in tRNA = pseudouridine(38/39/40) in tRNA. Formation of pseudouridine at positions 38, 39 and 40 in the anticodon stem and loop of transfer RNAs. This Aliivibrio fischeri (strain ATCC 700601 / ES114) (Vibrio fischeri) protein is tRNA pseudouridine synthase A.